Reading from the N-terminus, the 599-residue chain is Elongation factor 4 (599 aa).

The region spanning 2–184 (KNIRNFSIIA…RLVRDIPPPE (183 aa)) is the tr-type G domain. GTP-binding positions include 14–19 (DHGKST) and 131–134 (NKID).

This sequence belongs to the TRAFAC class translation factor GTPase superfamily. Classic translation factor GTPase family. LepA subfamily.

It is found in the cell inner membrane. The enzyme catalyses GTP + H2O = GDP + phosphate + H(+). Required for accurate and efficient protein synthesis under certain stress conditions. May act as a fidelity factor of the translation reaction, by catalyzing a one-codon backward translocation of tRNAs on improperly translocated ribosomes. Back-translocation proceeds from a post-translocation (POST) complex to a pre-translocation (PRE) complex, thus giving elongation factor G a second chance to translocate the tRNAs correctly. Binds to ribosomes in a GTP-dependent manner. The polypeptide is Elongation factor 4 (Citrobacter koseri (strain ATCC BAA-895 / CDC 4225-83 / SGSC4696)).